An 897-amino-acid chain; its full sequence is High molecular weight rhoptry protein 3 (897 aa).

The N-terminal stretch at 1 to 24 is a signal peptide; the sequence is MRSKHLVTLFIITFLSFSTVKVWG. Cystine bridges form between cysteine 157/cysteine 231, cysteine 244/cysteine 253, cysteine 262/cysteine 276, cysteine 421/cysteine 620, and cysteine 475/cysteine 536. The helical transmembrane segment at 597–615 threads the bilayer; the sequence is FVLYFISIISVLYINEYYY. Disordered regions lie at residues 788 to 845 and 859 to 897; these read KEQS…SNLK and QLDK…ENEL. Polar residues predominate over residues 792 to 801; it reads KSTSAASTSD. Over residues 802–817 the composition is skewed to low complexity; the sequence is EISGSEGPSTESTSTG. Serine 804 carries the post-translational modification Phosphoserine; by CDPK1. Residues 820–832 show a composition bias toward basic and acidic residues; sequence GEDKTTDNTYKEM. The span at 865 to 876 shows a compositional bias: basic residues; it reads PKKKKSKRKKKR. The span at 877-889 shows a compositional bias: basic and acidic residues; sequence DSSSDRILLEESK.

As to quaternary structure, component of the RhopH complex. RhopH complex is composed of CLAG3.1/CLAG3.2, RhopH2 and RhopH3 with a 1:1:1 subunit stoichiometry. Interacts with CLAG3.1/CLAG3.2. Interacts with CDPK1; the interaction promotes RhopH3 phosphorylation in merozoites. Post-translationally, proteolytically cleaved near C-terminus.

The protein resides in the host cell membrane. It is found in the parasitophorous vacuole membrane. It localises to the cytoplasm. The protein localises to the cytoplasmic vesicle. Its subcellular location is the secretory vesicle. The protein resides in the rhoptry. Participates in the formation of new permeability pathways in Plasmodium-infected erythrocytes enabling the uptake of nutrients from the blood plasma. Required for maintaining invasion capacity of merozoites. Required for the trophozoite to schizont developmental transition of the intracellular parasite. In Plasmodium falciparum (isolate 3D7), this protein is High molecular weight rhoptry protein 3.